The following is a 96-amino-acid chain: Phosphoribosyl-ATP pyrophosphatase (96 aa).

This sequence belongs to the PRA-PH family.

The protein resides in the cytoplasm. The catalysed reaction is 1-(5-phospho-beta-D-ribosyl)-ATP + H2O = 1-(5-phospho-beta-D-ribosyl)-5'-AMP + diphosphate + H(+). It participates in amino-acid biosynthesis; L-histidine biosynthesis; L-histidine from 5-phospho-alpha-D-ribose 1-diphosphate: step 2/9. This Methanococcus maripaludis (strain C6 / ATCC BAA-1332) protein is Phosphoribosyl-ATP pyrophosphatase.